The following is a 212-amino-acid chain: Large ribosomal subunit protein bL25 (212 aa).

Residues 1–25 (MSQSTIHKIAVKKRTETGKNENNRL) form a disordered region. The segment covering 13–24 (KRTETGKNENNR) has biased composition (basic and acidic residues).

Belongs to the bacterial ribosomal protein bL25 family. CTC subfamily. Part of the 50S ribosomal subunit; part of the 5S rRNA/L5/L18/L25 subcomplex. Contacts the 5S rRNA. Binds to the 5S rRNA independently of L5 and L18.

This is one of the proteins that binds to the 5S RNA in the ribosome where it forms part of the central protuberance. This chain is Large ribosomal subunit protein bL25, found in Leptospira borgpetersenii serovar Hardjo-bovis (strain JB197).